The primary structure comprises 258 residues: MLKTRVIPCLDVKDGRVVKGVQFLDLRDAGDPVEAAKAYDRAGADELCFLDITASHEARGILLDVVQRTAEACFMPLTVGGGVRTVEDIRALLLAGADKVSINTAAVNNPDFVAEAAEKFGAQCIVVAIDAKRVSGPGEPPRWEIFTHGGRRATGIDAVAFARTVTARGAGELLVTSMDRDGMRSGYDLGLTRAIADAVSVPVIASGGVGGLDDLVAGVAEGHASAVLAASIFHFGEATVAQAKAHMAAAGLAMRLDP.

Residues D11 and D130 contribute to the active site.

Belongs to the HisA/HisF family. In terms of assembly, heterodimer of HisH and HisF.

It localises to the cytoplasm. It catalyses the reaction 5-[(5-phospho-1-deoxy-D-ribulos-1-ylimino)methylamino]-1-(5-phospho-beta-D-ribosyl)imidazole-4-carboxamide + L-glutamine = D-erythro-1-(imidazol-4-yl)glycerol 3-phosphate + 5-amino-1-(5-phospho-beta-D-ribosyl)imidazole-4-carboxamide + L-glutamate + H(+). The protein operates within amino-acid biosynthesis; L-histidine biosynthesis; L-histidine from 5-phospho-alpha-D-ribose 1-diphosphate: step 5/9. Its function is as follows. IGPS catalyzes the conversion of PRFAR and glutamine to IGP, AICAR and glutamate. The HisF subunit catalyzes the cyclization activity that produces IGP and AICAR from PRFAR using the ammonia provided by the HisH subunit. This is Imidazole glycerol phosphate synthase subunit HisF from Methylobacterium nodulans (strain LMG 21967 / CNCM I-2342 / ORS 2060).